The primary structure comprises 69 residues: Small, acid-soluble spore protein I (69 aa).

It belongs to the SspI family.

It is found in the spore core. This chain is Small, acid-soluble spore protein I, found in Bacillus anthracis (strain A0248).